The chain runs to 858 residues: DNA mismatch repair protein MutS (858 aa).

600–607 (GPNMSGKS) provides a ligand contact to ATP. Positions 803–823 (EAASDEVDDNNSENSPMTDAE) are disordered.

Belongs to the DNA mismatch repair MutS family.

Its function is as follows. This protein is involved in the repair of mismatches in DNA. It is possible that it carries out the mismatch recognition step. This protein has a weak ATPase activity. This Lactobacillus helveticus (strain DPC 4571) protein is DNA mismatch repair protein MutS.